An 802-amino-acid chain; its full sequence is Spondin-1 (802 aa).

A signal peptide spans 1–23 (MAARLRPLALRLLARTFPLVARG). Residues 24–189 (FSDETLEKAA…DSASEGVTDK (166 aa)) form the Reelin domain. 17 disulfides stabilise this stretch: C39–C123, C151–C177, C194–C331, C195–C335, C197–C410, C438–C475, C449–C484, C454–C489, C497–C533, C508–C512, C543–C549, C554–C590, C565–C569, C600–C605, C610–C645, C621–C625, and C655–C660. The region spanning 190–383 (PTLDCCACGT…LTSLDHPQSP (194 aa)) is the Spondin domain. N209 carries an N-linked (GlcNAc...) asparagine glycan. Ca(2+) contacts are provided by D320, D349, and D353. 6 TSP type-1 domains span residues 437–490 (TCIY…PGCS), 496–550 (TCMM…EECS), 553–606 (SCLV…PECH), 609–661 (PCLL…PECP), 663–716 (DCEL…RKCL), and 749–801 (VCRL…NVHP). A glycan (N-linked (GlcNAc...) asparagine) is linked at N676.

Its subcellular location is the secreted. The protein resides in the extracellular space. It is found in the extracellular matrix. Cell adhesion protein that promotes the attachment of spinal cord and sensory neuron cells and the outgrowth of neurites in vitro. May contribute to the growth and guidance of axons in both the spinal cord and the PNS. Somite-derived spondin 1 is an inhibitory signal involved in patterning the segmental migration of neural crest cells and their topographical segregation within the rostral somites in vitro. May be required to prevent the lateral drifting of the commissural axons after having crossed the floor plate. This chain is Spondin-1 (SPON1), found in Gallus gallus (Chicken).